Reading from the N-terminus, the 348-residue chain is Erythronate-4-phosphate dehydrogenase (348 aa).

Substrate-binding residues include Thr-46 and Thr-67. Asp-147 contacts NAD(+). The active site involves Arg-209. Asp-233 provides a ligand contact to NAD(+). Glu-238 is a catalytic residue. The active-site Proton donor is His-255. NAD(+) is bound at residue Gly-258. Position 259 (Tyr-259) interacts with substrate.

This sequence belongs to the D-isomer specific 2-hydroxyacid dehydrogenase family. PdxB subfamily. As to quaternary structure, homodimer.

It is found in the cytoplasm. It catalyses the reaction 4-phospho-D-erythronate + NAD(+) = (R)-3-hydroxy-2-oxo-4-phosphooxybutanoate + NADH + H(+). It functions in the pathway cofactor biosynthesis; pyridoxine 5'-phosphate biosynthesis; pyridoxine 5'-phosphate from D-erythrose 4-phosphate: step 2/5. Catalyzes the oxidation of erythronate-4-phosphate to 3-hydroxy-2-oxo-4-phosphonooxybutanoate. The sequence is that of Erythronate-4-phosphate dehydrogenase from Bacteroides thetaiotaomicron (strain ATCC 29148 / DSM 2079 / JCM 5827 / CCUG 10774 / NCTC 10582 / VPI-5482 / E50).